The sequence spans 500 residues: NADH-quinone oxidoreductase subunit N (500 aa).

14 consecutive transmembrane segments (helical) span residues 13–33, 42–62, 79–99, 111–131, 133–153, 168–188, 211–231, 245–265, 281–301, 321–341, 342–362, 386–406, 424–444, and 461–481; these read VMMP…IDLF, LLGL…LSLW, FAKS…LLSI, GEFY…ASSG, LITL…LVAI, VITG…IFGF, YVLS…LASA, TTPV…VIVL, ASML…TMII, VAHA…MFEA, IWFY…ILQV, AIAM…AGFI, VLAS…FGIF, and PPGV…LGVF.

This sequence belongs to the complex I subunit 2 family. As to quaternary structure, NDH-1 is composed of 14 different subunits. Subunits NuoA, H, J, K, L, M, N constitute the membrane sector of the complex.

Its subcellular location is the cell membrane. The catalysed reaction is a quinone + NADH + 5 H(+)(in) = a quinol + NAD(+) + 4 H(+)(out). NDH-1 shuttles electrons from NADH, via FMN and iron-sulfur (Fe-S) centers, to quinones in the respiratory chain. The immediate electron acceptor for the enzyme in this species is believed to be a menaquinone. Couples the redox reaction to proton translocation (for every two electrons transferred, four hydrogen ions are translocated across the cytoplasmic membrane), and thus conserves the redox energy in a proton gradient. The sequence is that of NADH-quinone oxidoreductase subunit N from Anoxybacillus flavithermus (strain DSM 21510 / WK1).